The following is a 115-amino-acid chain: uncharacterized protein (115 aa).

Residues 1–91 (MTEYNANSIR…SELEGFKNVS (91 aa)) enclose the HTH arsR-type domain. The segment at residues 30–53 (ASLISHTLLLSYATVLRHLRILND) is a DNA-binding region (H-T-H motif).

Its function is as follows. Essential for virus function. This is an uncharacterized protein from Saccharolobus solfataricus (Sulfolobus solfataricus).